The following is a 539-amino-acid chain: Protein TIC 55, chloroplastic (539 aa).

A chloroplast-targeting transit peptide spans 1-50; the sequence is MAVPFLSSSLQLTPTSPILFTKVTPTPIIHNHRSTCTIPTKPRLRLLRRS. An N-acetylalanine modification is found at alanine 51. Topologically, residues 51–482 are stromal; it reads AVAGTAVSDQ…VIKSFELWKN (432 aa). The Rieske domain maps to 88-193; the sequence is WYPLYLTKNV…VKDSQGVVWV (106 aa). 4 residues coordinate [2Fe-2S] cluster: cysteine 129, histidine 131, cysteine 148, and histidine 151. Histidine 242 and histidine 247 together coordinate Fe cation. A Redox-active motif motif is present at residues 467–470; that stretch reads CRSC. The helical transmembrane segment at 483-500 threads the bilayer; sequence ILSATAVALTALAILVVS. The Chloroplast intermembrane segment spans residues 501 to 504; the sequence is RQWK. Residues 505–527 traverse the membrane as a helical segment; that stretch reads AVLLGSAALCSAAAYTCLRAINL. The Stromal segment spans residues 528–539; sequence NTNNFIRTHRRL.

In terms of assembly, part of the Tic complex. Interacts with TIC62 and TIC110. [2Fe-2S] cluster is required as a cofactor. As to expression, highly expressed in green tissues and very low levels in non-photosynthetic tissues such as roots and etiolated seedlings.

Its subcellular location is the plastid. It localises to the chloroplast inner membrane. In terms of biological role, involved in protein precursor import into chloroplasts. Part of the redox regulon consisting of TIC32, TIC 55 and TIC62. In Arabidopsis thaliana (Mouse-ear cress), this protein is Protein TIC 55, chloroplastic (TIC55).